The following is a 273-amino-acid chain: tRNA (guanine-N(7)-)-methyltransferase (273 aa).

Positions 86, 109, 111, 142, 143, and 162 each coordinate S-adenosyl-L-methionine. Aspartate 165 is a catalytic residue. The alphaC helix stretch occupies residues 166–174 (PHFKKTKHK). Residues threonine 240 and glutamate 242 each coordinate S-adenosyl-L-methionine. The segment at 240 to 248 (TEEGKKVQR) is alpha6 helix.

The protein belongs to the class I-like SAM-binding methyltransferase superfamily. TrmB family. In terms of assembly, catalytic component of the METTL1-WDR4 complex, composed of mettl1 and wdr4.

It is found in the nucleus. It carries out the reaction guanosine(46) in tRNA + S-adenosyl-L-methionine = N(7)-methylguanosine(46) in tRNA + S-adenosyl-L-homocysteine. The catalysed reaction is a guanosine in mRNA + S-adenosyl-L-methionine = an N(7)-methylguanosine in mRNA + S-adenosyl-L-homocysteine. It catalyses the reaction a guanosine in miRNA + S-adenosyl-L-methionine = an N(7)-methylguanosine in miRNA + S-adenosyl-L-homocysteine. The protein operates within tRNA modification; N(7)-methylguanine-tRNA biosynthesis. Its function is as follows. Catalytic component of METTL1-WDR4 methyltransferase complex that mediates the formation of N(7)-methylguanine in a subset of RNA species, such as tRNAs, mRNAs and microRNAs (miRNAs). Catalyzes the formation of N(7)-methylguanine at position 46 (m7G46) in a large subset of tRNAs that contain the 5'-RAGGU-3' motif within the variable loop. M7G46 interacts with C13-G22 in the D-loop to stabilize tRNA tertiary structure and protect tRNAs from decay. Also acts as a methyltransferase for a subset of internal N(7)-methylguanine in mRNAs. Internal N(7)-methylguanine methylation of mRNAs in response to stress promotes their relocalization to stress granules, thereby suppressing their translation. Also methylates a specific subset of miRNAs. This Xenopus laevis (African clawed frog) protein is tRNA (guanine-N(7)-)-methyltransferase (mettl1).